We begin with the raw amino-acid sequence, 223 residues long: MKFVAFERAKQGTGASRRLRITGRTPGIVYGGGAEPQQIEIDHNALWHALKKEAFHAAVLDMELDGKDNKVLLRDVQMHPFKQLILHVDFQRVDASTRLHMKVPLHYSGDENSPAVKTEGCIANHVITEIEVLCLPTDLPEFIAVDLSGLKKGASLHLADVALPKGVTAVTRGNKNPVLVSVVVIGAAEAPVAEAGAAPVAAAAPAAAGKAAPAAKAPAAKKK.

This sequence belongs to the bacterial ribosomal protein bL25 family. CTC subfamily. As to quaternary structure, part of the 50S ribosomal subunit; part of the 5S rRNA/L5/L18/L25 subcomplex. Contacts the 5S rRNA. Binds to the 5S rRNA independently of L5 and L18.

Its function is as follows. This is one of the proteins that binds to the 5S RNA in the ribosome where it forms part of the central protuberance. This chain is Large ribosomal subunit protein bL25, found in Albidiferax ferrireducens (strain ATCC BAA-621 / DSM 15236 / T118) (Rhodoferax ferrireducens).